Reading from the N-terminus, the 165-residue chain is Probable cell wall protein PGA15 (165 aa).

The first 16 residues, 1–16 (MKFIIILFTLISIVTA), serve as a signal peptide directing secretion. S143 is lipidated: GPI-anchor amidated serine. Residues 144–165 (GAANYLTSFSIGTFFVFVLGLI) constitute a propeptide, removed in mature form.

The protein belongs to the IHD1 family. The GPI-anchor is attached to the protein in the endoplasmic reticulum and serves to target the protein to the cell surface. There, the glucosamine-inositol phospholipid moiety is cleaved off and the GPI-modified mannoprotein is covalently attached via its lipidless GPI glycan remnant to the 1,6-beta-glucan of the outer cell wall layer.

It localises to the secreted. Its subcellular location is the cell wall. It is found in the membrane. In terms of biological role, probable GPI-anchored cell wall protein that may be involved in cell wall organization, hyphal growth, as well as in virulence. In Candida albicans (strain SC5314 / ATCC MYA-2876) (Yeast), this protein is Probable cell wall protein PGA15 (PGA15).